The following is a 553-amino-acid chain: Muellerian-inhibiting factor (553 aa).

The first 22 residues, 1-22 (MQGPHLSLLLLLLATMGAVLQA), serve as a signal peptide directing secretion. A propeptide spanning residues 23–445 (DTVEELTNTR…GREGRGRAGR (423 aa)) is cleaved from the precursor. 2 N-linked (GlcNAc...) asparagine glycosylation sites follow: Asn325 and Asn409. Intrachain disulfides connect Cys455–Cys519, Cys481–Cys550, and Cys485–Cys552.

Belongs to the TGF-beta family. In terms of assembly, homodimer; disulfide-linked. Preproprotein is proteolytically processed to generate N- and C-terminal cleavage products that homodimerize and associate to form a biologically active non-covalent complex. Binding of the non-covalent complex to AMHR2 induces dissociation of the pro-region from the mature C-terminal dimer. The N-terminal portion of the protein, despite having no intrinsic activity, has the role of amplifying the activity of the C-terminus. As to expression, mainly expressed in granulosa cells from preantral and small antral follicles.

It is found in the secreted. Its function is as follows. Plays an important role in several reproductive functions. Induces Muellerian duct regression during male fetal sexual differentiation and plays a role in Leydig cell differentiation and function. In female acts as a negative regulator of the primordial to primary follicle transition and decreases FSH sensitivity of growing follicles. AMH signals by binding to a specific type-II receptor, AMHR2, that heterodimerizes with type-I receptors (ACVR1 and BMPR1A), and recruiting SMAD proteins that are translocated to the nucleus to regulate target gene expression. The polypeptide is Muellerian-inhibiting factor (Amh) (Rattus norvegicus (Rat)).